The following is a 65-amino-acid chain: uncharacterized protein (65 aa).

This is an uncharacterized protein from Saccharomyces cerevisiae (strain ATCC 204508 / S288c) (Baker's yeast).